Consider the following 172-residue polypeptide: Adenine phosphoribosyltransferase (172 aa).

It belongs to the purine/pyrimidine phosphoribosyltransferase family. Homodimer.

Its subcellular location is the cytoplasm. The catalysed reaction is AMP + diphosphate = 5-phospho-alpha-D-ribose 1-diphosphate + adenine. The protein operates within purine metabolism; AMP biosynthesis via salvage pathway; AMP from adenine: step 1/1. Catalyzes a salvage reaction resulting in the formation of AMP, that is energically less costly than de novo synthesis. The chain is Adenine phosphoribosyltransferase from Malacoplasma penetrans (strain HF-2) (Mycoplasma penetrans).